The following is a 495-amino-acid chain: Probable leucine aminopeptidase 2 (495 aa).

The N-terminal stretch at 1–21 is a signal peptide; sequence MKSQLLSLAVAVTTISQGVVG. The PA domain occupies 130–216; it reads MAELVVAKNN…SQEDGKNLAT (87 aa). Residues N142 and N235 are each glycosylated (N-linked (GlcNAc...) asparagine). The Zn(2+) site is built by H259 and D271. Residue N272 is glycosylated (N-linked (GlcNAc...) asparagine). The active-site Proton acceptor is the E303. Zn(2+)-binding residues include E304 and D332. N-linked (GlcNAc...) asparagine glycosylation is present at N352. H430 is a binding site for Zn(2+).

Belongs to the peptidase M28 family. M28A subfamily. As to quaternary structure, monomer. Zn(2+) serves as cofactor.

It localises to the secreted. In terms of biological role, extracellular aminopeptidase that releases a wide variety of amino acids from natural peptides and contributes to pathogenicity. In Trichophyton verrucosum (strain HKI 0517), this protein is Probable leucine aminopeptidase 2 (LAP2).